The sequence spans 436 residues: 3-ketoacyl-CoA thiolase (436 aa).

Cys-99 functions as the Acyl-thioester intermediate in the catalytic mechanism. Residues His-392 and Cys-422 each act as proton acceptor in the active site.

This sequence belongs to the thiolase-like superfamily. Thiolase family. As to quaternary structure, heterotetramer of two alpha chains (FadJ) and two beta chains (FadI).

The protein resides in the cytoplasm. It catalyses the reaction an acyl-CoA + acetyl-CoA = a 3-oxoacyl-CoA + CoA. It participates in lipid metabolism; fatty acid beta-oxidation. Functionally, catalyzes the final step of fatty acid oxidation in which acetyl-CoA is released and the CoA ester of a fatty acid two carbons shorter is formed. The chain is 3-ketoacyl-CoA thiolase from Shigella flexneri serotype 5b (strain 8401).